The primary structure comprises 398 residues: Inositol polyphosphate 5-phosphatase (398 aa).

It belongs to the inositol 1,4,5-trisphosphate 5-phosphatase type II family. In terms of tissue distribution, expressed in tail, cilia, dendrites, axon and male head.

Its subcellular location is the cytoplasm. Its function is as follows. Dephosphorylates a number of phosphatidylinositols. Controls the cellular levels and subcellular distribution of phosphatidylinositol 3,5-bisphosphate and phosphatidylinositol 3,4,5-trisphosphate. Has a role in sperm activation and motility. Influences the localization of the transient receptor potential polycystin (TRPP) complex proteins lov-1 and pkd-2. In Caenorhabditis elegans, this protein is Inositol polyphosphate 5-phosphatase.